The chain runs to 284 residues: Nucleotide-binding protein PputGB1_0956 (284 aa).

8–15 (GRSGSGKS) is an ATP binding site. Residue 60 to 63 (DARN) coordinates GTP.

The protein belongs to the RapZ-like family.

Functionally, displays ATPase and GTPase activities. The chain is Nucleotide-binding protein PputGB1_0956 from Pseudomonas putida (strain GB-1).